A 513-amino-acid chain; its full sequence is ATP synthase subunit alpha (513 aa).

Position 169–176 (169–176) interacts with ATP; it reads GDRQTGKT.

This sequence belongs to the ATPase alpha/beta chains family. As to quaternary structure, F-type ATPases have 2 components, CF(1) - the catalytic core - and CF(0) - the membrane proton channel. CF(1) has five subunits: alpha(3), beta(3), gamma(1), delta(1), epsilon(1). CF(0) has three main subunits: a(1), b(2) and c(9-12). The alpha and beta chains form an alternating ring which encloses part of the gamma chain. CF(1) is attached to CF(0) by a central stalk formed by the gamma and epsilon chains, while a peripheral stalk is formed by the delta and b chains.

The protein resides in the cell inner membrane. The catalysed reaction is ATP + H2O + 4 H(+)(in) = ADP + phosphate + 5 H(+)(out). Produces ATP from ADP in the presence of a proton gradient across the membrane. The alpha chain is a regulatory subunit. This is ATP synthase subunit alpha from Mannheimia succiniciproducens (strain KCTC 0769BP / MBEL55E).